Here is a 234-residue protein sequence, read N- to C-terminus: Response regulator RppA (234 aa).

A Response regulatory domain is found at 2 to 118 (RILLVEDETD…ELLARLRALQ (117 aa)). 4-aspartylphosphate is present on Asp-53. The ompR/PhoB-type DNA-binding region spans 126-232 (PQILTLGNFS…VPGQGYRFTL (107 aa)).

As to quaternary structure, interacts with histidine kinase Hik2; may accept phosphate from Hik2.

In terms of biological role, member of two-component regulatory system RppA/RppB, involved in the establishment of the appropriate stoichiometry between the 2 photosystems. It senses changes in the plastoquinone (PQ) redox poise. Another group shows this two-component pair, renamed NrsR/NrsS, controls the nickel-dependent expression of the nrsBACD operon; they suggest the photosystem-related activities seen earlier are due to the expression of NrsS (RppB) in the absence of its natural substrate NrsR (RppA). May accept phosphate from Hik2 in a possible Hik2/RppA two-component system. The sequence is that of Response regulator RppA from Synechocystis sp. (strain ATCC 27184 / PCC 6803 / Kazusa).